The chain runs to 169 residues: Ribosome maturation factor RimP (169 aa).

The protein belongs to the RimP family.

Its subcellular location is the cytoplasm. Its function is as follows. Required for maturation of 30S ribosomal subunits. This chain is Ribosome maturation factor RimP, found in Koribacter versatilis (strain Ellin345).